The sequence spans 244 residues: S-adenosyl-L-methionine-dependent Diels-Alderase iliD (244 aa).

Belongs to the class I-like SAM-binding methyltransferase superfamily. Erg6/SMT family. It depends on S-adenosyl-L-methionine as a cofactor.

It catalyses the reaction 3-[(2E,4E,8S,10E,12Z)-4,8-dimethyltetradeca-2,4,10,12-tetraenoyl]-4-hydroxy-5-(4-hydroxyphenyl)-1,2-dihydropyridin-2-one = ilicicolin H. It participates in mycotoxin biosynthesis. Functionally, S-adenosyl-l-methionine-dependent Diels-Alderase; part of the gene cluster that mediates the biosynthesis of ilicicolin H, a 4-hydroxy-2-pyridonealkaloid that has potent and broad antifungal activities by inhibiting the mitochondrial respiration chain. IliD catalyzes the Diels-Alder reaction that converts the acyclic 2-pyridone intermediate to 8-epi-ilicicolin H. The biosynthesis of ilicicolin H starts with formation of the tetramic acid by the hybrid PKS-NRPS synthetase iliA with the partnering trans-enoyl reductase iliB since iliA lacks a designated enoylreductase (ER) domain. The cytochrome P450 monooxygenase iliC then catalyzes the ring expansion of the tetramate to the acyclic 2-pyridone. The pericyclase iliD further converts the acyclic 2-pyridone into 8-epi-ilicicolin H. 8-epi-ilicicolin H might then spontaneously convert to ilicicolin H since ilicicolin H is produced in the absence of the epimerase iliE, in contrast to what was observed for the Talaromyces variabilis ilicolin H biosynthetic pathway. The polypeptide is S-adenosyl-L-methionine-dependent Diels-Alderase iliD (Neonectria sp. (strain DH2)).